We begin with the raw amino-acid sequence, 246 residues long: Putative S-adenosyl-L-methionine-dependent methyltransferase Mflv_0168 (246 aa).

S-adenosyl-L-methionine is bound by residues D112 and D141–L142.

Belongs to the UPF0677 family.

In terms of biological role, exhibits S-adenosyl-L-methionine-dependent methyltransferase activity. This Mycolicibacterium gilvum (strain PYR-GCK) (Mycobacterium gilvum (strain PYR-GCK)) protein is Putative S-adenosyl-L-methionine-dependent methyltransferase Mflv_0168.